The sequence spans 297 residues: Lipoyl synthase (297 aa).

[4Fe-4S] cluster-binding residues include Cys-37, Cys-42, Cys-48, Cys-63, Cys-67, Cys-70, and Ser-276. The 217-residue stretch at 49–265 folds into the Radical SAM core domain; the sequence is WSRKHATVMI…ERIAKTKGFL (217 aa).

Belongs to the radical SAM superfamily. Lipoyl synthase family. [4Fe-4S] cluster is required as a cofactor.

Its subcellular location is the cytoplasm. It catalyses the reaction [[Fe-S] cluster scaffold protein carrying a second [4Fe-4S](2+) cluster] + N(6)-octanoyl-L-lysyl-[protein] + 2 oxidized [2Fe-2S]-[ferredoxin] + 2 S-adenosyl-L-methionine + 4 H(+) = [[Fe-S] cluster scaffold protein] + N(6)-[(R)-dihydrolipoyl]-L-lysyl-[protein] + 4 Fe(3+) + 2 hydrogen sulfide + 2 5'-deoxyadenosine + 2 L-methionine + 2 reduced [2Fe-2S]-[ferredoxin]. It participates in protein modification; protein lipoylation via endogenous pathway; protein N(6)-(lipoyl)lysine from octanoyl-[acyl-carrier-protein]: step 2/2. Functionally, catalyzes the radical-mediated insertion of two sulfur atoms into the C-6 and C-8 positions of the octanoyl moiety bound to the lipoyl domains of lipoate-dependent enzymes, thereby converting the octanoylated domains into lipoylated derivatives. This chain is Lipoyl synthase, found in Rickettsia prowazekii (strain Madrid E).